The following is a 298-amino-acid chain: DNA-binding transcriptional activator HetR (298 aa).

Serine 152 is a catalytic residue.

It belongs to the peptidase S48 family. Homodimer; disulfide-linked.

Controls heterocyst differentiation. Dimerization is required for DNA-binding. Has both a protease and a DNA-binding activity. The protein is DNA-binding transcriptional activator HetR of Nostoc sp. (strain PCC 9229).